A 306-amino-acid polypeptide reads, in one-letter code: tRNA pseudouridine synthase B (306 aa).

The Nucleophile role is filled by aspartate 47.

It belongs to the pseudouridine synthase TruB family. Type 1 subfamily.

It carries out the reaction uridine(55) in tRNA = pseudouridine(55) in tRNA. In terms of biological role, responsible for synthesis of pseudouridine from uracil-55 in the psi GC loop of transfer RNAs. In Neisseria gonorrhoeae (strain NCCP11945), this protein is tRNA pseudouridine synthase B.